The following is a 184-amino-acid chain: Shikimate kinase (184 aa).

ATP is bound at residue 15–20; sequence GAGKTS. Thr19 provides a ligand contact to Mg(2+). 3 residues coordinate substrate: Asp37, Arg61, and Gly83. Arg123 lines the ATP pocket. A substrate-binding site is contributed by Arg142.

It belongs to the shikimate kinase family. Monomer. Mg(2+) serves as cofactor.

It localises to the cytoplasm. The enzyme catalyses shikimate + ATP = 3-phosphoshikimate + ADP + H(+). It functions in the pathway metabolic intermediate biosynthesis; chorismate biosynthesis; chorismate from D-erythrose 4-phosphate and phosphoenolpyruvate: step 5/7. Functionally, catalyzes the specific phosphorylation of the 3-hydroxyl group of shikimic acid using ATP as a cosubstrate. This Coxiella burnetii (strain CbuK_Q154) (Coxiella burnetii (strain Q154)) protein is Shikimate kinase.